Consider the following 416-residue polypeptide: Tyrosine permease (416 aa).

Transmembrane regions (helical) follow at residues 13–33 (GTML…PIAM), 34–54 (AGIW…MMLL), 86–106 (VVVG…YISG), 127–147 (LSVI…SLLV), 153–173 (VLII…IWHV), 192–212 (LPYI…HGNV), 231–251 (IFIG…VTMG), 260–280 (PIIA…GLFT), 286–306 (LILT…ATLG), 337–357 (VVCF…GLAF), and 389–409 (ILNL…LDVF).

The protein belongs to the amino acid/polyamine transporter 2 family. Mtr/TnaB/TyrP permease subfamily.

Its subcellular location is the cell inner membrane. This Enterobacter agglomerans (Erwinia herbicola) protein is Tyrosine permease (tutB).